We begin with the raw amino-acid sequence, 396 residues long: 1-deoxy-D-xylulose 5-phosphate reductoisomerase (396 aa).

5 residues coordinate NADPH: threonine 13, glycine 14, serine 15, isoleucine 16, and asparagine 127. Residue lysine 128 participates in 1-deoxy-D-xylulose 5-phosphate binding. NADPH is bound at residue glutamate 129. Aspartate 153 contributes to the Mn(2+) binding site. 4 residues coordinate 1-deoxy-D-xylulose 5-phosphate: serine 154, glutamate 155, serine 184, and histidine 207. Glutamate 155 contacts Mn(2+). Residue glycine 213 participates in NADPH binding. The 1-deoxy-D-xylulose 5-phosphate site is built by serine 220, asparagine 225, lysine 226, and glutamate 229. Glutamate 229 is a binding site for Mn(2+).

This sequence belongs to the DXR family. Mg(2+) serves as cofactor. It depends on Mn(2+) as a cofactor.

The enzyme catalyses 2-C-methyl-D-erythritol 4-phosphate + NADP(+) = 1-deoxy-D-xylulose 5-phosphate + NADPH + H(+). The protein operates within isoprenoid biosynthesis; isopentenyl diphosphate biosynthesis via DXP pathway; isopentenyl diphosphate from 1-deoxy-D-xylulose 5-phosphate: step 1/6. Functionally, catalyzes the NADPH-dependent rearrangement and reduction of 1-deoxy-D-xylulose-5-phosphate (DXP) to 2-C-methyl-D-erythritol 4-phosphate (MEP). The sequence is that of 1-deoxy-D-xylulose 5-phosphate reductoisomerase from Pseudomonas syringae pv. syringae (strain B728a).